The sequence spans 111 residues: Histone H2A-Bbd type 1 (111 aa).

This sequence belongs to the histone H2A family. As to quaternary structure, the nucleosome is a histone octamer containing two molecules each of H2A, H2B, H3 and H4 assembled in one H3-H4 heterotetramer and two H2A-H2B heterodimers. Incorporated into nucleosomes during late spermatogenesis. Interacts with H2BC1/TH2B; preferentially dimerizes with H2BC1/TH2B to form nucleosomes. As to expression, highly expressed in adult testis, mainly in spermatocytes.

Its subcellular location is the nucleus. It is found in the chromosome. Atypical histone H2A which replaces conventional H2A during late spermatogenesis and is involved in the replacement of histones to protamine in male germ cells. Core component of nucleosome: nucleosomes wrap and compact DNA into chromatin, limiting DNA accessibility to the cellular machineries which require DNA as a template. Nucleosomes containing H2AB1 only wrap 130 bp of DNA, compared to 147 bp for classical nucleosomes. In condensing spermatids, the heterodimer between H2AB1 and H2BC1/TH2B is loaded onto the nucleosomes and promotes loading of transition proteins (TNP1 and TNP2) onto the nucleosomes. Inclusion of the H2AB1-H2BC1/TH2B dimer into chromatin opens the nucleosomes, releasing the nucleosomal DNA ends and allowing the invasion of nucleosomes by transition proteins (TNP1 and TNP2). Then, transition proteins drive the recruitment and processing of protamines, which are responsible for histone eviction. This chain is Histone H2A-Bbd type 1 (H2ab1), found in Mus musculus (Mouse).